The following is a 180-amino-acid chain: UPF0227 protein YpsIP31758_1593 (180 aa).

The protein belongs to the UPF0227 family.

This Yersinia pseudotuberculosis serotype O:1b (strain IP 31758) protein is UPF0227 protein YpsIP31758_1593.